We begin with the raw amino-acid sequence, 491 residues long: UDP-GalNAc:beta-1,3-N-acetylgalactosaminyltransferase 2 (491 aa).

Residues 1–2 (MR) lie on the Cytoplasmic side of the membrane. The chain crosses the membrane as a helical; Signal-anchor for type II membrane protein span at residues 3 to 23 (SAAAALSVCVLAVLLHWICWT). The Lumenal portion of the chain corresponds to 24–491 (DRSAELLGFR…NKCGDPCGCS (468 aa)). 2 N-linked (GlcNAc...) asparagine glycosylation sites follow: asparagine 167 and asparagine 230.

The protein belongs to the glycosyltransferase 31 family.

It localises to the golgi apparatus membrane. It is found in the endoplasmic reticulum. It catalyses the reaction 3-O-(N-acetyl-beta-D-glucosaminyl-(1-&gt;4)-alpha-D-mannosyl)-L-threonyl-[protein] + UDP-N-acetyl-alpha-D-galactosamine = 3-O-[beta-D-GalNAc-(1-&gt;3)-beta-D-GlcNAc-(1-&gt;4)-alpha-D-Man]-L-Thr-[protein] + UDP + H(+). The protein operates within protein modification; protein glycosylation. Its function is as follows. Beta-1,3-N-acetylgalactosaminyltransferase that synthesizes a unique carbohydrate structure, GalNAc-beta-1-3GlcNAc, on N- and O-glycans. Has no galactose nor galactosaminyl transferase activity toward any acceptor substrate. Involved in alpha-dystroglycan (dag1) glycosylation. The chain is UDP-GalNAc:beta-1,3-N-acetylgalactosaminyltransferase 2 (b3galnt2) from Danio rerio (Zebrafish).